We begin with the raw amino-acid sequence, 846 residues long: uncharacterized protein (846 aa).

Disordered regions lie at residues V159–I217, C254–N276, N332–I414, G459–L501, Q556–D651, and T803–K846. The segment covering H163–I217 has biased composition (low complexity). Low complexity predominate over residues L355–I414. Polar residues predominate over residues G459–A482. 3 stretches are compositionally biased toward low complexity: residues S483–L501, Q568–N642, and N811–K846.

This is an uncharacterized protein from Dictyostelium discoideum (Social amoeba).